Reading from the N-terminus, the 375-residue chain is Hemolysin BL-binding component (375 aa).

A signal peptide spans 1 to 31 (MIKKIPYKLLAVSTLLTITTANVVSPVATFA). Residues 232–252 (FNVMKGAILGLPIIGGIIVGV) form a helical membrane-spanning segment.

In terms of assembly, composed of a binding component, B, and two lytic components, L1 and L2. All three subunits act synergically to cause hemolysis.

The protein resides in the secreted. It localises to the host cell membrane. Cytotoxic protein, part of the enterotoxin complex. Responsible for binding to erythrocytes. This enterotoxin is thought to be the cause of the diarrheal form of gastroenteritis caused by food-borne strains of B.cereus. In Bacillus cereus, this protein is Hemolysin BL-binding component (hblA).